The sequence spans 803 residues: Exocyst complex component 6 (803 aa).

The protein belongs to the SEC15 family. In terms of assembly, the exocyst complex is composed of EXOC1, EXOC2, EXOC3, EXOC4, EXOC5, EXOC6, EXOC7 and EXOC8. Interacts with CNTRL. Interacts with RAB11A in a GTP-dependent manner.

The protein localises to the cytoplasm. The protein resides in the perinuclear region. Its subcellular location is the cell projection. It localises to the growth cone. It is found in the midbody. The protein localises to the midbody ring. Functionally, component of the exocyst complex involved in the docking of exocytic vesicles with fusion sites on the plasma membrane. Together with RAB11A, RAB3IP, RAB8A, PARD3, PRKCI, ANXA2, CDC42 and DNMBP promotes transcytosis of PODXL to the apical membrane initiation sites (AMIS), apical surface formation and lumenogenesis. This Canis lupus familiaris (Dog) protein is Exocyst complex component 6 (EXOC6).